Consider the following 328-residue polypeptide: N-acyl-aromatic-L-amino acid amidohydrolase (carboxylate-forming) A (328 aa).

Zn(2+) is bound by residues His30 and Glu33. Substrate-binding positions include Arg74 and 81 to 82 (NR). Position 127 (His127) interacts with Zn(2+). Substrate is bound by residues Glu189 and Tyr300.

The protein belongs to the AspA/AstE family. Aspartoacylase subfamily. Homotetramer. Zn(2+) serves as cofactor.

It is found in the apical cell membrane. The protein localises to the cytoplasm. The catalysed reaction is an N-acyl-aromatic L-alpha-amino acid + H2O = an aromatic L-alpha-amino acid + a carboxylate. The enzyme catalyses an N-acetyl-L-cysteine-S-conjugate + H2O = an S-substituted L-cysteine + acetate. Plays an important role in deacetylating mercapturic acids in kidney proximal tubules. The polypeptide is N-acyl-aromatic-L-amino acid amidohydrolase (carboxylate-forming) A (acy3.1) (Danio rerio (Zebrafish)).